The sequence spans 431 residues: Enolase (431 aa).

A (2R)-2-phosphoglycerate-binding site is contributed by Gln-167. Glu-209 acts as the Proton donor in catalysis. Mg(2+) contacts are provided by Asp-246, Glu-289, and Asp-316. The (2R)-2-phosphoglycerate site is built by Lys-341, Arg-370, Ser-371, and Lys-392. Lys-341 (proton acceptor) is an active-site residue.

Belongs to the enolase family. As to quaternary structure, component of the RNA degradosome, a multiprotein complex involved in RNA processing and mRNA degradation. Mg(2+) is required as a cofactor.

Its subcellular location is the cytoplasm. The protein localises to the secreted. It localises to the cell surface. The enzyme catalyses (2R)-2-phosphoglycerate = phosphoenolpyruvate + H2O. The protein operates within carbohydrate degradation; glycolysis; pyruvate from D-glyceraldehyde 3-phosphate: step 4/5. In terms of biological role, catalyzes the reversible conversion of 2-phosphoglycerate (2-PG) into phosphoenolpyruvate (PEP). It is essential for the degradation of carbohydrates via glycolysis. This is Enolase from Shewanella baltica (strain OS155 / ATCC BAA-1091).